We begin with the raw amino-acid sequence, 238 residues long: MRTRRVYLPLKGELSMDWHDYLGPLGRGAWVTIQFTLYSMFFGAVCSFAFGIGKLSKNPFVKGFSILYIEIFRGTSLLVQLFWLFFALPIAGDMMGIDLRLSPVVAGVLALSLNLGAYGAEIVRGAIQAVSPSQYEAATALNFSSSQALWRVALPQAIPEMMPSFSNLAIAALKDTSLVSLITLHDLTFAAEQLRNFYQDSTTVYTMVLLMYFGIALVLSFFMRLIESSVTRWRGHRR.

The ABC transmembrane type-1 domain occupies 29 to 223 (AWVTIQFTLY…GIALVLSFFM (195 aa)). A run of 5 helical transmembrane segments spans residues 33-53 (IQFT…FGIG), 77-97 (LLVQ…MMGI), 103-123 (PVVA…AEIV), 152-172 (VALP…AIAA), and 203-223 (TVYT…SFFM).

It belongs to the binding-protein-dependent transport system permease family. HisMQ subfamily.

The protein resides in the cell inner membrane. Probably part of the binding-protein-dependent transport system y4tEFGH for an amino acid. Probably responsible for the translocation of the substrate across the membrane. The chain is Probable amino-acid ABC transporter permease protein y4tF from Sinorhizobium fredii (strain NBRC 101917 / NGR234).